Reading from the N-terminus, the 426-residue chain is Dihydroorotase (426 aa).

His59 and His61 together coordinate Zn(2+). Residues 61 to 63 (HLR) and Asn93 contribute to the substrate site. 3 residues coordinate Zn(2+): Asp151, His178, and His232. Asn279 lines the substrate pocket. Asp306 serves as a coordination point for Zn(2+). Asp306 is an active-site residue. Substrate contacts are provided by residues His310 and 324–325 (FG).

It belongs to the metallo-dependent hydrolases superfamily. DHOase family. Class I DHOase subfamily. The cofactor is Zn(2+).

The catalysed reaction is (S)-dihydroorotate + H2O = N-carbamoyl-L-aspartate + H(+). It participates in pyrimidine metabolism; UMP biosynthesis via de novo pathway; (S)-dihydroorotate from bicarbonate: step 3/3. Catalyzes the reversible cyclization of carbamoyl aspartate to dihydroorotate. This chain is Dihydroorotase, found in Brevibacillus brevis (strain 47 / JCM 6285 / NBRC 100599).